The chain runs to 120 residues: Large ribosomal subunit protein bL12 (120 aa).

This sequence belongs to the bacterial ribosomal protein bL12 family. In terms of assembly, homodimer. Part of the ribosomal stalk of the 50S ribosomal subunit. Forms a multimeric L10(L12)X complex, where L10 forms an elongated spine to which 2 to 4 L12 dimers bind in a sequential fashion. Binds GTP-bound translation factors.

Functionally, forms part of the ribosomal stalk which helps the ribosome interact with GTP-bound translation factors. Is thus essential for accurate translation. This is Large ribosomal subunit protein bL12 from Listeria welshimeri serovar 6b (strain ATCC 35897 / DSM 20650 / CCUG 15529 / CIP 8149 / NCTC 11857 / SLCC 5334 / V8).